The following is a 451-amino-acid chain: Bifunctional protein GlmU (451 aa).

A pyrophosphorylase region spans residues 1–225; that stretch reads MLEIIILAAG…EYEVLGVNNR (225 aa). UDP-N-acetyl-alpha-D-glucosamine-binding positions include 7 to 10, Lys21, Gln72, 77 to 78, 99 to 101, Gly136, Glu150, Asn165, and Asn223; these read LAAG, GT, and YGD. Asp101 is a Mg(2+) binding site. Asn223 lines the Mg(2+) pocket. A linker region spans residues 226-246; it reads LQQAELERIFQRQVAEELMVA. The segment at 247 to 451 is N-acetyltransferase; sequence GATLLDPARL…IKGWARPVKK (205 aa). UDP-N-acetyl-alpha-D-glucosamine-binding residues include Arg329 and Lys347. Catalysis depends on His359, which acts as the Proton acceptor. Residues Tyr362 and Asn373 each contribute to the UDP-N-acetyl-alpha-D-glucosamine site. Residues Ala376, 382–383, Ser401, Ala419, and Arg436 contribute to the acetyl-CoA site; that span reads NY.

In the N-terminal section; belongs to the N-acetylglucosamine-1-phosphate uridyltransferase family. It in the C-terminal section; belongs to the transferase hexapeptide repeat family. Homotrimer. Mg(2+) serves as cofactor.

It localises to the cytoplasm. The catalysed reaction is alpha-D-glucosamine 1-phosphate + acetyl-CoA = N-acetyl-alpha-D-glucosamine 1-phosphate + CoA + H(+). The enzyme catalyses N-acetyl-alpha-D-glucosamine 1-phosphate + UTP + H(+) = UDP-N-acetyl-alpha-D-glucosamine + diphosphate. It participates in nucleotide-sugar biosynthesis; UDP-N-acetyl-alpha-D-glucosamine biosynthesis; N-acetyl-alpha-D-glucosamine 1-phosphate from alpha-D-glucosamine 6-phosphate (route II): step 2/2. It functions in the pathway nucleotide-sugar biosynthesis; UDP-N-acetyl-alpha-D-glucosamine biosynthesis; UDP-N-acetyl-alpha-D-glucosamine from N-acetyl-alpha-D-glucosamine 1-phosphate: step 1/1. The protein operates within bacterial outer membrane biogenesis; LPS lipid A biosynthesis. Functionally, catalyzes the last two sequential reactions in the de novo biosynthetic pathway for UDP-N-acetylglucosamine (UDP-GlcNAc). The C-terminal domain catalyzes the transfer of acetyl group from acetyl coenzyme A to glucosamine-1-phosphate (GlcN-1-P) to produce N-acetylglucosamine-1-phosphate (GlcNAc-1-P), which is converted into UDP-GlcNAc by the transfer of uridine 5-monophosphate (from uridine 5-triphosphate), a reaction catalyzed by the N-terminal domain. The sequence is that of Bifunctional protein GlmU from Saccharophagus degradans (strain 2-40 / ATCC 43961 / DSM 17024).